A 547-amino-acid chain; its full sequence is Chaperonin GroEL (547 aa).

ATP is bound by residues 30–33 (TLGP), Lys-51, 87–91 (DGTTT), Gly-415, and Asp-496. A disordered region spans residues 527–547 (SDKAEPMPMRGGMGGMGGMDF). The span at 537–547 (GGMGGMGGMDF) shows a compositional bias: gly residues.

Belongs to the chaperonin (HSP60) family. Forms a cylinder of 14 subunits composed of two heptameric rings stacked back-to-back. Interacts with the co-chaperonin GroES.

It localises to the cytoplasm. It carries out the reaction ATP + H2O + a folded polypeptide = ADP + phosphate + an unfolded polypeptide.. In terms of biological role, together with its co-chaperonin GroES, plays an essential role in assisting protein folding. The GroEL-GroES system forms a nano-cage that allows encapsulation of the non-native substrate proteins and provides a physical environment optimized to promote and accelerate protein folding. The polypeptide is Chaperonin GroEL (Rickettsia rickettsii (strain Sheila Smith)).